A 539-amino-acid polypeptide reads, in one-letter code: Kynureninase 2 (539 aa).

Residues 60–87 are disordered; the sequence is DGGVAGETKEPRVPNGVSSATKPNGTVN. Positions 75–87 are enriched in polar residues; the sequence is GVSSATKPNGTVN. Residues Leu-171, Thr-172, 199–202, Asp-290, His-293, and Tyr-315 contribute to the pyridoxal 5'-phosphate site; that span reads FPSD. Residue Lys-316 is modified to N6-(pyridoxal phosphate)lysine. The segment covering 340–352 has biased composition (gly residues); sequence GGGGSGGVGGGRG. The segment at 340–363 is disordered; sequence GGGGSGGVGGGRGEGGDGDGGDGG. 2 residues coordinate pyridoxal 5'-phosphate: Trp-379 and Asn-407.

This sequence belongs to the kynureninase family. In terms of assembly, homodimer. Pyridoxal 5'-phosphate serves as cofactor.

It localises to the cytoplasm. The catalysed reaction is L-kynurenine + H2O = anthranilate + L-alanine + H(+). The enzyme catalyses 3-hydroxy-L-kynurenine + H2O = 3-hydroxyanthranilate + L-alanine + H(+). The protein operates within amino-acid degradation; L-kynurenine degradation; L-alanine and anthranilate from L-kynurenine: step 1/1. It participates in cofactor biosynthesis; NAD(+) biosynthesis; quinolinate from L-kynurenine: step 2/3. Catalyzes the cleavage of L-kynurenine (L-Kyn) and L-3-hydroxykynurenine (L-3OHKyn) into anthranilic acid (AA) and 3-hydroxyanthranilic acid (3-OHAA), respectively. This chain is Kynureninase 2, found in Chaetomium globosum (strain ATCC 6205 / CBS 148.51 / DSM 1962 / NBRC 6347 / NRRL 1970) (Soil fungus).